We begin with the raw amino-acid sequence, 491 residues long: UDP-N-acetylmuramate--L-alanine ligase (491 aa).

126–132 (GTHGKTT) is an ATP binding site.

It belongs to the MurCDEF family.

Its subcellular location is the cytoplasm. The catalysed reaction is UDP-N-acetyl-alpha-D-muramate + L-alanine + ATP = UDP-N-acetyl-alpha-D-muramoyl-L-alanine + ADP + phosphate + H(+). It functions in the pathway cell wall biogenesis; peptidoglycan biosynthesis. In terms of biological role, cell wall formation. The sequence is that of UDP-N-acetylmuramate--L-alanine ligase from Escherichia coli (strain SMS-3-5 / SECEC).